The sequence spans 1228 residues: Clustered mitochondria protein homolog (1228 aa).

One can recognise a Clu domain in the interval 298-557 (PSSLPSNSID…DNNPLDVGFA (260 aa)). A TPR 1 repeat occupies 486-519 (CYGFDEASNKVIADAEFGSSLDDFAKVFHLKKHE). A coiled-coil region spans residues 671 to 702 (LGRVIELAEQELEAQRALREAHLQQVEADNKE). TPR repeat units follow at residues 982-1015 (AESY…YERV) and 1108-1141 (AVNE…FSKE).

Belongs to the CLU family. In terms of assembly, may associate with the eukaryotic translation initiation factor 3 (eIF-3) complex.

It is found in the cytoplasm. In terms of biological role, mRNA-binding protein involved in proper cytoplasmic distribution of mitochondria. The polypeptide is Clustered mitochondria protein homolog (Eremothecium gossypii (strain ATCC 10895 / CBS 109.51 / FGSC 9923 / NRRL Y-1056) (Yeast)).